The following is a 221-amino-acid chain: Adenylate kinase (221 aa).

10-15 (GAGKGT) contributes to the ATP binding site. The interval 30 to 59 (STGDMLRAAVKAGTPLGLEAKRFMDAGELV) is NMP. Residues T31, R36, 57-59 (ELV), 85-88 (GFPR), and Q92 contribute to the AMP site. Residues 122-159 (GRRSHAASGRTYHVKFNPPKVEGLDDVTGEPLIQRDDD) are LID. Residues R123 and 132-133 (TY) each bind ATP. 2 residues coordinate AMP: R156 and R167. G207 provides a ligand contact to ATP.

Belongs to the adenylate kinase family. As to quaternary structure, monomer.

The protein resides in the cytoplasm. The enzyme catalyses AMP + ATP = 2 ADP. It functions in the pathway purine metabolism; AMP biosynthesis via salvage pathway; AMP from ADP: step 1/1. Its function is as follows. Catalyzes the reversible transfer of the terminal phosphate group between ATP and AMP. Plays an important role in cellular energy homeostasis and in adenine nucleotide metabolism. The protein is Adenylate kinase of Paraburkholderia xenovorans (strain LB400).